Here is a 146-residue protein sequence, read N- to C-terminus: Catabolic 3-dehydroquinase (146 aa).

Tyr24 serves as the catalytic Proton acceptor. Positions 78, 84, and 91 each coordinate substrate. The Proton donor role is filled by His104. Substrate is bound by residues Ile105–Thr106 and Arg115.

It belongs to the type-II 3-dehydroquinase family. In terms of assembly, homododecamer. Adopts a ring-like structure, composed of an arrangement of two hexameric rings stacked on top of one another.

It catalyses the reaction 3-dehydroquinate = 3-dehydroshikimate + H2O. Its pathway is aromatic compound metabolism; 3,4-dihydroxybenzoate biosynthesis; 3,4-dihydroxybenzoate from 3-dehydroquinate: step 1/2. In terms of biological role, is involved in the catabolism of quinate. Allows the utilization of quinate as carbon source via the beta-ketoadipate pathway. The protein is Catabolic 3-dehydroquinase of Candida tropicalis (strain ATCC MYA-3404 / T1) (Yeast).